The primary structure comprises 545 residues: Probable protein kinase UbiB (545 aa).

Positions 123–501 (DFEPIALASA…QIKQRQSQYL (379 aa)) constitute a Protein kinase domain. Residues 129–137 (LASASIAQV) and Lys-152 each bind ATP. The active-site Proton acceptor is the Asp-287. A helical transmembrane segment spans residues 508–528 (LFLCGSLFLLSGLANIPWLFI).

This sequence belongs to the ABC1 family. UbiB subfamily.

The protein localises to the cell inner membrane. Its pathway is cofactor biosynthesis; ubiquinone biosynthesis [regulation]. In terms of biological role, is probably a protein kinase regulator of UbiI activity which is involved in aerobic coenzyme Q (ubiquinone) biosynthesis. The polypeptide is Probable protein kinase UbiB (Photorhabdus laumondii subsp. laumondii (strain DSM 15139 / CIP 105565 / TT01) (Photorhabdus luminescens subsp. laumondii)).